We begin with the raw amino-acid sequence, 364 residues long: Coproporphyrin III ferrochelatase (364 aa).

Arg-29 and Tyr-118 together coordinate Fe-coproporphyrin III. Fe(2+) contacts are provided by His-169 and Glu-250.

Belongs to the ferrochelatase family.

The protein resides in the cytoplasm. The catalysed reaction is Fe-coproporphyrin III + 2 H(+) = coproporphyrin III + Fe(2+). The protein operates within porphyrin-containing compound metabolism; protoheme biosynthesis. Its function is as follows. Involved in coproporphyrin-dependent heme b biosynthesis. Catalyzes the insertion of ferrous iron into coproporphyrin III to form Fe-coproporphyrin III. This Streptococcus pneumoniae (strain 70585) protein is Coproporphyrin III ferrochelatase.